A 143-amino-acid polypeptide reads, in one-letter code: uncharacterized protein (143 aa).

Positions 1-37 (MSAPASSSAIAPSQPTAPGHARHSASWSASASDPSGA) are disordered.

It belongs to the dynein light chain Tctex-type family.

This is an uncharacterized protein from Mycosarcoma maydis (Corn smut fungus).